The chain runs to 896 residues: Myelin regulatory factor-like protein (896 aa).

A DNA-binding region (NDT80) is located at residues 111–403 (GLPHRTFHNC…SNPGQFENDI (293 aa)). One can recognise a Peptidase S74 domain in the interval 449 to 557 (SDSRAKQNVQ…KLTNNLEERI (109 aa)). Residues 541–573 (GAVKQLCKLTNNLEERIEELEIWNRKLARLKRL) adopt a coiled-coil conformation. Residues 622-638 (VFQSLVITLIAVMAFCL) form a helical membrane-spanning segment. Polar residues predominate over residues 648 to 658 (APSSNLTSSQE). The interval 648–672 (APSSNLTSSQEPALPSTASPSAPNT) is disordered. Low complexity predominate over residues 659–672 (PALPSTASPSAPNT).

Belongs to the MRF family.

It is found in the membrane. The sequence is that of Myelin regulatory factor-like protein (MYRFL) from Bos taurus (Bovine).